A 145-amino-acid chain; its full sequence is Basic phospholipase A2 cPt09 (145 aa).

An N-terminal signal peptide occupies residues 1–21 (MYPAHLLVLLAVCVSLLGAST). Positions 22–27 (IPPLPL) are excised as a propeptide. Cystine bridges form between Cys38–Cys98, Cys54–Cys144, Cys56–Cys72, Cys71–Cys125, Cys78–Cys118, Cys87–Cys111, and Cys105–Cys116. Residues Tyr55, Gly57, and Gly59 each contribute to the Ca(2+) site. The active site involves His75. Asp76 is a Ca(2+) binding site. Asp119 is an active-site residue.

Belongs to the phospholipase A2 family. Group I subfamily. D49 sub-subfamily. The cofactor is Ca(2+). As to expression, expressed by the venom gland.

The protein localises to the secreted. The enzyme catalyses a 1,2-diacyl-sn-glycero-3-phosphocholine + H2O = a 1-acyl-sn-glycero-3-phosphocholine + a fatty acid + H(+). Functionally, PLA2 catalyzes the calcium-dependent hydrolysis of the 2-acyl groups in 3-sn-phosphoglycerides. This chain is Basic phospholipase A2 cPt09, found in Laticauda semifasciata (Black-banded sea krait).